The sequence spans 271 residues: Troponin T, fast skeletal muscle (271 aa).

Positions 1-21 (MSDEEVEHVEEEYEEEEEAQE) are enriched in acidic residues. Positions 1-74 (MSDEEVEHVE…EKVDFDDIQK (74 aa)) are disordered. An N-acetylserine modification is found at S2. S2 bears the Phosphoserine mark. Basic and acidic residues-rich tracts occupy residues 31-53 (PEVH…EKPR) and 62-74 (PEGE…DIQK). S90 is subject to Phosphoserine. A compositionally biased stretch (basic and acidic residues) spans 113–155 (RAERAEQQRIRAEKERERQNRLAEEKARREEEDAKRRAEDDLK). Residues 113–194 (RAERAEQQRI…REMKKKVLAE (82 aa)) are disordered. 3 positions are modified to phosphoserine: S161, S168, and S169. Over residues 183-194 (TAREMKKKVLAE) the composition is skewed to basic and acidic residues. S205 is subject to Phosphoserine. Y221 is subject to Phosphotyrosine. The interval 248-271 (IDQAQKHSKKAGTAPKGKVGGRWK) is disordered.

This sequence belongs to the troponin T family.

Its function is as follows. Troponin T is the tropomyosin-binding subunit of troponin, the thin filament regulatory complex which confers calcium-sensitivity to striated muscle actomyosin ATPase activity. The polypeptide is Troponin T, fast skeletal muscle (Tnnt3) (Bos taurus (Bovine)).